Reading from the N-terminus, the 199-residue chain is uncharacterized protein (199 aa).

A helical membrane pass occupies residues 21-38; it reads ISPSATNFIVSLVIMILI.

The protein resides in the membrane. This is an uncharacterized protein from Saccharomyces cerevisiae (strain ATCC 204508 / S288c) (Baker's yeast).